Reading from the N-terminus, the 346-residue chain is Sensor histidine kinase GraS (346 aa).

Transmembrane regions (helical) follow at residues 15-35 (INWI…AYID) and 43-63 (VFYI…FTFV). Residues 126–332 (EFVHDIKTPV…TFYFIFPQQN (207 aa)) enclose the Histidine kinase domain. Position 129 is a phosphohistidine; by autocatalysis (H129).

Autophosphorylated.

The protein localises to the cell membrane. The catalysed reaction is ATP + protein L-histidine = ADP + protein N-phospho-L-histidine.. Functionally, member of the two-component regulatory system GraR/GraS involved in resistance against cationic antimicrobial peptides (CAMPs). GraS probably functions as a sensor protein kinase which is autophosphorylated at a histidine residue and transfers its phosphate group to GraR. This is Sensor histidine kinase GraS (graS) from Staphylococcus epidermidis (strain ATCC 35984 / DSM 28319 / BCRC 17069 / CCUG 31568 / BM 3577 / RP62A).